The following is a 232-amino-acid chain: LexA repressor (232 aa).

The segment at residues 26 to 46 (FDEMKDALDLRSKSGIHRLIT) is a DNA-binding region (H-T-H motif). Active-site for autocatalytic cleavage activity residues include Ser-153 and Lys-191.

Belongs to the peptidase S24 family. Homodimer.

The catalysed reaction is Hydrolysis of Ala-|-Gly bond in repressor LexA.. Its function is as follows. Represses a number of genes involved in the response to DNA damage (SOS response), including recA and lexA. In the presence of single-stranded DNA, RecA interacts with LexA causing an autocatalytic cleavage which disrupts the DNA-binding part of LexA, leading to derepression of the SOS regulon and eventually DNA repair. This is LexA repressor from Afipia carboxidovorans (strain ATCC 49405 / DSM 1227 / KCTC 32145 / OM5) (Oligotropha carboxidovorans).